The sequence spans 552 residues: E3 ubiquitin-protein ligase MGRN1 (552 aa).

A lipid anchor (N-myristoyl glycine) is attached at Gly-2. The segment at 278–317 (CVVCLSDLRDTLILPCRHLCLCTSCADTLRYQANNCPICR) adopts an RING-type zinc-finger fold. Positions 355-384 (SCPFKKSKPHPASLASKKPKRETNSDSVPP) are disordered. The Required for TSG101-binding signature appears at 406-409 (PSAP). Tyr-411 bears the Phosphotyrosine mark. Positions 439-552 (SSRQKGRPQS…PDSCSVGIDE (114 aa)) are disordered. Positions 450–460 (APDSTLRSPSS) are enriched in polar residues. Residues 464–475 (EEDEEKLSEDVD) show a composition bias toward acidic residues. A Phosphoserine modification is found at Ser-471. Positions 504–523 (SSSPQQGTRAASIENVLQDS) are enriched in polar residues. The residue at position 524 (Ser-524) is a Phosphoserine.

In terms of assembly, interacts with MC1R and MC4R, but not with TBXA2R. Interacts with TSG101. Interacts with mislocalized cytosolically exposed PRNP; this interaction alters MGRN1 subcellular location and causes lysosomal enlargement. Post-translationally, autoubiquitinated in vitro.

Its subcellular location is the early endosome. It localises to the cytoplasm. The protein resides in the cytosol. It is found in the nucleus. The protein localises to the cell membrane. It catalyses the reaction S-ubiquitinyl-[E2 ubiquitin-conjugating enzyme]-L-cysteine + [acceptor protein]-L-lysine = [E2 ubiquitin-conjugating enzyme]-L-cysteine + N(6)-ubiquitinyl-[acceptor protein]-L-lysine.. It participates in protein modification; protein ubiquitination. Functionally, E3 ubiquitin-protein ligase. Mediates monoubiquitination at multiple sites of TSG101 in the presence of UBE2D1, but not of UBE2G1, nor UBE2H. Plays a role in the regulation of endosome-to-lysosome trafficking. Impairs MC1R- and MC4R-signaling by competing with GNAS-binding to MCRs and inhibiting agonist-induced cAMP production. Does not inhibit ADRB2-signaling. Does not promote MC1R ubiquitination. Acts also as a negative regulator of hedgehog signaling. The sequence is that of E3 ubiquitin-protein ligase MGRN1 (MGRN1) from Homo sapiens (Human).